Here is a 353-residue protein sequence, read N- to C-terminus: Protein RecA (353 aa).

67 to 74 (GPESSGKT) contacts ATP. The disordered stretch occupies residues 330–353 (SNPNSTPDFSVDDSEGVAETNEDF). Over residues 339-353 (SVDDSEGVAETNEDF) the composition is skewed to acidic residues.

This sequence belongs to the RecA family.

The protein localises to the cytoplasm. In terms of biological role, can catalyze the hydrolysis of ATP in the presence of single-stranded DNA, the ATP-dependent uptake of single-stranded DNA by duplex DNA, and the ATP-dependent hybridization of homologous single-stranded DNAs. It interacts with LexA causing its activation and leading to its autocatalytic cleavage. The sequence is that of Protein RecA from Escherichia coli O157:H7 (strain EC4115 / EHEC).